A 103-amino-acid polypeptide reads, in one-letter code: Large ribosomal subunit protein eL43 (103 aa).

This sequence belongs to the eukaryotic ribosomal protein eL43 family.

The polypeptide is Large ribosomal subunit protein eL43 (RPL37A) (Tetrahymena thermophila (strain SB210)).